The following is a 495-amino-acid chain: Catalase (495 aa).

The disordered stretch occupies residues 1–25 (MSNNKKLTSLFGAPVSDRENSMTAG). Catalysis depends on residues His-55 and Asn-128. Residue Tyr-338 coordinates heme.

Belongs to the catalase family. Homodimer. It depends on heme as a cofactor.

It catalyses the reaction 2 H2O2 = O2 + 2 H2O. Functionally, decomposes hydrogen peroxide into water and oxygen; serves to protect cells from the toxic effects of hydrogen peroxide. The polypeptide is Catalase (katA) (Staphylococcus saprophyticus subsp. saprophyticus (strain ATCC 15305 / DSM 20229 / NCIMB 8711 / NCTC 7292 / S-41)).